Reading from the N-terminus, the 358-residue chain is CCAAT/enhancer-binding protein alpha (358 aa).

Residues 1-55 (MESADFYEAEPRPPMSSHLQSPPHAPSSAAFGFPRGAGPAQPPAPPAAPEPLGGI) are disordered. Residues 1 to 70 (MESADFYEAE…SIDISAYIDP (70 aa)) are required to repress E2F1:TFDP1-mediated transcription, to inhibit cell cycle and to induce adipocyte differentiation. Positions 29–39 (AAFGFPRGAGP) are enriched in low complexity. Residues 40 to 49 (AQPPAPPAAP) show a composition bias toward pro residues. Residues 54–72 (GICEHETSIDISAYIDPAA) form a required for interaction with TRIB1 region. The segment at 128–204 (PPGYGCAAAG…HPPPAHLAAP (77 aa)) is required to induce adipocyte differentiation. N6-acetyllysine; alternate is present on Lys-161. Lys-161 is covalently cross-linked (Glycyl lysine isopeptide (Lys-Gly) (interchain with G-Cter in SUMO2); alternate). 2 disordered regions span residues 178–201 (LFPY…PAHL) and 217–291 (TMHL…RRER). Composition is skewed to pro residues over residues 181-199 (YQPP…PPPA) and 224-238 (HPTP…PHPA). Positions 182-198 (QPPPPPPPSHPHPHPPP) are required to functionally cooperate with SREBF1 in promoter activation. Residue Ser-190 is modified to Phosphoserine. Thr-226 and Thr-230 each carry phosphothreonine; by GSK3. Phosphoserine; by GSK3 is present on Ser-234. Residues 239-259 (PALGAAGLPGPGSALKGLGAA) are compositionally biased toward low complexity. Residues 244–358 (AGLPGPGSAL…SLVKAMGNCA (115 aa)) are interaction with FOXO1. Residues 276 to 291 (KSVDKNSNEYRVRRER) are compositionally biased toward basic and acidic residues. Residues 282 to 345 (SNEYRVRRER…DTLRGIFRQL (64 aa)) form the bZIP domain. Residues 285–300 (YRVRRERNNIAVRKSR) mediate DNA binding. A basic motif region spans residues 286–313 (RVRRERNNIAVRKSRDKAKQRNVETQQK). The leucine-zipper stretch occupies residues 317 to 345 (LTSDNDRLRKRVEQLSRELDTLRGIFRQL).

The protein belongs to the bZIP family. C/EBP subfamily. In terms of assembly, binds DNA as a homodimer and as a heterodimer. Can form stable heterodimers with CEBPB, CEBPD, CEBPE and CEBPG. Interacts with PRDM16. Interacts with UBN1. Interacts with ZNF638; this interaction increases transcriptional activation. Interacts with the complex TFDP2:E2F1; the interaction prevents CEBPA binding to target gene promoters and represses its transcriptional activity. Interacts with RB1. Interacts (when phosphorylated at Ser-190) with CDK2, CDK4, E2F4 and SMARCA2. Interacts with SREBPF1. Interacts with FOXO1 (via the Fork-head domain); the interaction increases when FOXO1 is deacetylated. Interacts with SIX1. Interacts (via recognition sequence) with TRIB1. Interacts (via bZIP domain) with OVOL2 (via zinc-finger domains); the interaction inhibits the transcription factor activity of CEBPA and is required to repress adipogenesis. Interacts with TAF1A and UBTF. As to quaternary structure, interacts with TAF1A and UBTF. Interacts with NPM1. In terms of assembly, (Microbial infection) Interacts with HBV protein X. (Microbial infection) Interacts with Epstein-Barr virus lytic switch protein BZLF1; this interaction induces G1 cell cycle arrest. In terms of processing, phosphorylation at Ser-190 is required for interaction with CDK2, CDK4 and SWI/SNF complex leading to cell cycle inhibition. Dephosphorylated at Ser-190 by protein phosphatase 2A (PP2A) through PI3K/AKT signaling pathway regulation. Phosphorylation at Thr-226 and Thr-230 by GSK3 is constitutive in adipose tissue and lung. In liver, both Thr-226 and Thr-230 are phosphorylated only during feeding but not during fasting. Phosphorylation of the GSK3 consensus sites selectively decreases transactivation activity on IRE-controlled promoters. Post-translationally, sumoylated, sumoylation blocks the inhibitory effect on cell proliferation by disrupting the interaction with SMARCA2. Ubiquitinated by COP1 upon interaction with TRIB1.

The protein resides in the nucleus. It localises to the nucleolus. Functionally, transcription factor that coordinates proliferation arrest and the differentiation of myeloid progenitors, adipocytes, hepatocytes, and cells of the lung and the placenta. Binds directly to the consensus DNA sequence 5'-T[TG]NNGNAA[TG]-3' acting as an activator on distinct target genes. During early embryogenesis, plays essential and redundant functions with CEBPB. Essential for the transition from common myeloid progenitors (CMP) to granulocyte/monocyte progenitors (GMP). Critical for the proper development of the liver and the lung. Necessary for terminal adipocyte differentiation, is required for postnatal maintenance of systemic energy homeostasis and lipid storage. To regulate these different processes at the proper moment and tissue, interplays with other transcription factors and modulators. Down-regulates the expression of genes that maintain cells in an undifferentiated and proliferative state through E2F1 repression, which is critical for its ability to induce adipocyte and granulocyte terminal differentiation. Reciprocally E2F1 blocks adipocyte differentiation by binding to specific promoters and repressing CEBPA binding to its target gene promoters. Proliferation arrest also depends on a functional binding to SWI/SNF complex. In liver, regulates gluconeogenesis and lipogenesis through different mechanisms. To regulate gluconeogenesis, functionally cooperates with FOXO1 binding to IRE-controlled promoters and regulating the expression of target genes such as PCK1 or G6PC1. To modulate lipogenesis, interacts and transcriptionally synergizes with SREBF1 in promoter activation of specific lipogenic target genes such as ACAS2. In adipose tissue, seems to act as FOXO1 coactivator accessing to ADIPOQ promoter through FOXO1 binding sites. Its function is as follows. Can act as dominant-negative. Binds DNA and have transctivation activity, even if much less efficiently than isoform 2. Does not inhibit cell proliferation. Directly and specifically enhances ribosomal DNA transcription interacting with RNA polymerase I-specific cofactors and inducing histone acetylation. This chain is CCAAT/enhancer-binding protein alpha, found in Homo sapiens (Human).